A 230-amino-acid chain; its full sequence is Flavin-dependent thymidylate synthase (230 aa).

The ThyX domain maps to 1 to 217 (MEIKVLEKGF…PVTYEAFLNF (217 aa)). FAD is bound by residues S55, 78 to 80 (RHR), and E86. DUMP-binding positions include 75 to 78 (QLVR), 86 to 90 (ERSGR), and R156. The short motif at 78 to 88 (RHRIASINERS) is the ThyX motif element. FAD-binding positions include 172–174 (NAR) and N178. R183 contributes to the dUMP binding site. The active-site Involved in ionization of N3 of dUMP, leading to its activation is R183.

The protein belongs to the thymidylate synthase ThyX family. In terms of assembly, homotetramer. It depends on FAD as a cofactor.

It catalyses the reaction dUMP + (6R)-5,10-methylene-5,6,7,8-tetrahydrofolate + NADPH + H(+) = dTMP + (6S)-5,6,7,8-tetrahydrofolate + NADP(+). It participates in pyrimidine metabolism; dTTP biosynthesis. Catalyzes the reductive methylation of 2'-deoxyuridine-5'-monophosphate (dUMP) to 2'-deoxythymidine-5'-monophosphate (dTMP) while utilizing 5,10-methylenetetrahydrofolate (mTHF) as the methyl donor, and NADPH and FADH(2) as the reductant. The sequence is that of Flavin-dependent thymidylate synthase from Kosmotoga olearia (strain ATCC BAA-1733 / DSM 21960 / TBF 19.5.1).